The sequence spans 354 residues: MISELQQKITVLKDLLKTNKADAILIGSDQNRFWLTNFPSSAGWLIITSNKAKLFIDGRYYEAARNFINPIVEVELFVSFKQVKAFCESNGINHLLIEGDYLTFNYQDWIQAICKQYTVINAQEIRRVKLPSEIQAIEKAVDITRKVAVKLKRFIKPKMTELFISQWITNELVKQGGAKNSFDPIVATGKNGANPHHKPTKTIVKEGDFITCDFGTIYNGYCSDITRTFLVGKKPKSAKLLSAYKKVEEANLAGINAVNTTLTGSQVDKVCRDIIENSEFKDFFVHSTGHGVGIDIHEMPNVSQSYNKLLCENGVVTIEPGIYIPNLGGIRIEDMVLVKKEKSVWLSKSIPRAF.

The Mn(2+) site is built by aspartate 213, aspartate 224, histidine 290, glutamate 319, and glutamate 333.

This sequence belongs to the peptidase M24B family. Mn(2+) serves as cofactor.

The catalysed reaction is Release of any N-terminal amino acid, including proline, that is linked to proline, even from a dipeptide or tripeptide.. This is Putative Xaa-Pro aminopeptidase (pepP) from Mycoplasma genitalium (strain ATCC 33530 / DSM 19775 / NCTC 10195 / G37) (Mycoplasmoides genitalium).